The sequence spans 236 residues: Glucosamine-6-phosphate deaminase (236 aa).

The active-site Proton acceptor; for enolization step is the aspartate 67. Asparagine 136 acts as the For ring-opening step in catalysis. Catalysis depends on histidine 138, which acts as the Proton acceptor; for ring-opening step. Catalysis depends on glutamate 143, which acts as the For ring-opening step.

It belongs to the glucosamine/galactosamine-6-phosphate isomerase family. NagB subfamily.

It carries out the reaction alpha-D-glucosamine 6-phosphate + H2O = beta-D-fructose 6-phosphate + NH4(+). It participates in amino-sugar metabolism; N-acetylneuraminate degradation; D-fructose 6-phosphate from N-acetylneuraminate: step 5/5. Functionally, catalyzes the reversible isomerization-deamination of glucosamine 6-phosphate (GlcN6P) to form fructose 6-phosphate (Fru6P) and ammonium ion. This chain is Glucosamine-6-phosphate deaminase, found in Lachnoclostridium phytofermentans (strain ATCC 700394 / DSM 18823 / ISDg) (Clostridium phytofermentans).